Consider the following 353-residue polypeptide: MAMTLLEDWCRGMDVNSQRALLVWGIPVNCDETEIEETLQAAMPQVSYRVLGRMFWREENAKAALLELTGTVDYSLIPREMPGKGGLWKVVFKPPTSDAEFLERLHLFLAREGWTVQDVARVLGFQNPAPAPGPEMPAEMLNYILDNVIQPLVESIWYKKLTLFSGRDIPGPGEETFDSWLEHSNEVIEEWQVSDIEKRRRLMESLRGPAADVIRILKTNNPAITTAECLKALEQVFGSVESSRDAQVRFLNTYQNPGEKLSSYVIRLEPLLQKVVDKGAIDKDNVNQARLEQVIAGANHSGALRRQLWLTGATEGPAPNLFQLLVQIREEEAKEEEEEAEAALLQLGLEGHF.

This sequence belongs to the PNMA family. In terms of tissue distribution, testis and brain specific.

It is found in the nucleus. Its subcellular location is the nucleolus. In Rattus norvegicus (Rat), this protein is Paraneoplastic antigen Ma1 homolog (Pnma1).